A 657-amino-acid polypeptide reads, in one-letter code: tRNA 5-methylaminomethyl-2-thiouridine biosynthesis bifunctional protein MnmC (657 aa).

A tRNA (mnm(5)s(2)U34)-methyltransferase region spans residues 1-236; it reads MPDRLVPATL…KRAMLVGEYA (236 aa). The segment at 261–657 is FAD-dependent cmnm(5)s(2)U34 oxidoreductase; that stretch reads IGAGVAGCAV…LRARQVSAAD (397 aa).

The protein in the N-terminal section; belongs to the methyltransferase superfamily. tRNA (mnm(5)s(2)U34)-methyltransferase family. It in the C-terminal section; belongs to the DAO family. Requires FAD as cofactor.

The protein localises to the cytoplasm. It carries out the reaction 5-aminomethyl-2-thiouridine(34) in tRNA + S-adenosyl-L-methionine = 5-methylaminomethyl-2-thiouridine(34) in tRNA + S-adenosyl-L-homocysteine + H(+). In terms of biological role, catalyzes the last two steps in the biosynthesis of 5-methylaminomethyl-2-thiouridine (mnm(5)s(2)U) at the wobble position (U34) in tRNA. Catalyzes the FAD-dependent demodification of cmnm(5)s(2)U34 to nm(5)s(2)U34, followed by the transfer of a methyl group from S-adenosyl-L-methionine to nm(5)s(2)U34, to form mnm(5)s(2)U34. The polypeptide is tRNA 5-methylaminomethyl-2-thiouridine biosynthesis bifunctional protein MnmC (Burkholderia multivorans (strain ATCC 17616 / 249)).